The following is a 150-amino-acid chain: Macrodomain Ter protein (150 aa).

The protein belongs to the MatP family. As to quaternary structure, homodimer.

The protein resides in the cytoplasm. Its function is as follows. Required for spatial organization of the terminus region of the chromosome (Ter macrodomain) during the cell cycle. Prevents early segregation of duplicated Ter macrodomains during cell division. Binds specifically to matS, which is a 13 bp signature motif repeated within the Ter macrodomain. This chain is Macrodomain Ter protein, found in Salmonella typhi.